A 76-amino-acid polypeptide reads, in one-letter code: MSVEEKVKKIIMDQLGVSAEEVKPEASFVEDLGADSLDLTELIMAMEEEFGTEIDDDDAQKILKVKDAIDYIAGKQ.

The 76-residue stretch at 1 to 76 (MSVEEKVKKI…DAIDYIAGKQ (76 aa)) folds into the Carrier domain. The residue at position 36 (serine 36) is an O-(pantetheine 4'-phosphoryl)serine.

Belongs to the acyl carrier protein (ACP) family. Post-translationally, 4'-phosphopantetheine is transferred from CoA to a specific serine of apo-ACP by AcpS. This modification is essential for activity because fatty acids are bound in thioester linkage to the sulfhydryl of the prosthetic group.

The protein resides in the cytoplasm. Its pathway is lipid metabolism; fatty acid biosynthesis. Its function is as follows. Carrier of the growing fatty acid chain in fatty acid biosynthesis. This chain is Acyl carrier protein, found in Oleidesulfovibrio alaskensis (strain ATCC BAA-1058 / DSM 17464 / G20) (Desulfovibrio alaskensis).